Here is a 267-residue protein sequence, read N- to C-terminus: Acetyl-coenzyme A carboxylase carboxyl transferase subunit beta, chloroplastic (267 aa).

Residues 12–267 (LWKKCDSCNI…TIHMILDLHN (256 aa)) enclose the CoA carboxyltransferase N-terminal domain. C16, C19, C35, and C38 together coordinate Zn(2+). A C4-type zinc finger spans residues 16-38 (CDSCNILISKFDFYKHDKVCPEC).

This sequence belongs to the AccD/PCCB family. In terms of assembly, acetyl-CoA carboxylase is a heterohexamer composed of biotin carboxyl carrier protein, biotin carboxylase and 2 subunits each of ACCase subunit alpha and ACCase plastid-coded subunit beta (accD). Zn(2+) serves as cofactor.

It localises to the plastid. It is found in the chloroplast stroma. The enzyme catalyses N(6)-carboxybiotinyl-L-lysyl-[protein] + acetyl-CoA = N(6)-biotinyl-L-lysyl-[protein] + malonyl-CoA. The protein operates within lipid metabolism; malonyl-CoA biosynthesis; malonyl-CoA from acetyl-CoA: step 1/1. In terms of biological role, component of the acetyl coenzyme A carboxylase (ACC) complex. Biotin carboxylase (BC) catalyzes the carboxylation of biotin on its carrier protein (BCCP) and then the CO(2) group is transferred by the transcarboxylase to acetyl-CoA to form malonyl-CoA. The chain is Acetyl-coenzyme A carboxylase carboxyl transferase subunit beta, chloroplastic from Cyanidium caldarium (Red alga).